The sequence spans 278 residues: C-type lectin domain family 1 member A (278 aa).

Residues 1 to 42 are disordered; sequence MLAKYSSTRDMLDADGDTTMSLHSQASATSQRPELGHTEHQR. The Cytoplasmic segment spans residues 1 to 52; that stretch reads MLAKYSSTRDMLDADGDTTMSLHSQASATSQRPELGHTEHQRPSSAWRPVAL. A compositionally biased stretch (polar residues) spans 18–32; sequence TTMSLHSQASATSQR. Residues 53–73 traverse the membrane as a helical; Signal-anchor for type II membrane protein segment; sequence ILLTLCLVLLIGLAALGLVFF. The Extracellular segment spans residues 74 to 278; sequence QFYQLSNTQQ…LHEPLSRRWR (205 aa). N-linked (GlcNAc...) asparagine glycosylation is found at N95 and N169. Residues 144–258 form the C-type lectin domain; it reads HGDKCYQFYK…CRELRRCACE (115 aa). 2 cysteine pairs are disulfide-bonded: C165–C257 and C236–C249.

It localises to the membrane. In Bos taurus (Bovine), this protein is C-type lectin domain family 1 member A (CLEC1A).